A 626-amino-acid chain; its full sequence is Probable serine/threonine-protein kinase CCRP1 (626 aa).

One can recognise a Protein kinase domain in the interval 36–291; it reads YSKGRMLGKG…LDEILQHPFL (256 aa). Residues 42–50 and Lys65 contribute to the ATP site; that span reads LGKGGFAKC. Ser71 carries the phosphoserine modification. The Proton acceptor role is filled by Asp159. Residues 399–433 are disordered; it reads NFTKTGSWQSNLNGTQSVKGSSRPQTVQQKGDLKS. The span at 400–427 shows a compositional bias: polar residues; the sequence is FTKTGSWQSNLNGTQSVKGSSRPQTVQQ. POLO box domains follow at residues 471 to 554 and 574 to 626; these read WVKK…YLEG and YVKK…PISP.

Belongs to the protein kinase superfamily. Ser/Thr protein kinase family. CDC5/Polo subfamily. Embryo.

It carries out the reaction L-seryl-[protein] + ATP = O-phospho-L-seryl-[protein] + ADP + H(+). It catalyses the reaction L-threonyl-[protein] + ATP = O-phospho-L-threonyl-[protein] + ADP + H(+). May play a role in the division of some cell types. The protein is Probable serine/threonine-protein kinase CCRP1 (CCRP1) of Zea mays (Maize).